Reading from the N-terminus, the 401-residue chain is Diphosphomevalonate decarboxylase (401 aa).

Ala2 carries the N-acetylalanine modification. Residues 24 to 27 (YWGK), Arg79, 157 to 162 (SGSACR), and Thr213 contribute to the (R)-5-diphosphomevalonate site. Residues 382–401 (VLDDPHHHLLGPDGLPQRDL) are disordered.

Belongs to the diphosphomevalonate decarboxylase family. As to quaternary structure, homodimer.

It localises to the cytoplasm. It carries out the reaction (R)-5-diphosphomevalonate + ATP = isopentenyl diphosphate + ADP + phosphate + CO2. It participates in steroid biosynthesis; cholesterol biosynthesis. Its function is as follows. Catalyzes the ATP dependent decarboxylation of (R)-5-diphosphomevalonate to form isopentenyl diphosphate (IPP). Functions in the mevalonate (MVA) pathway leading to isopentenyl diphosphate (IPP), a key precursor for the biosynthesis of isoprenoids and sterol synthesis. The protein is Diphosphomevalonate decarboxylase (Mvd) of Rattus norvegicus (Rat).